Reading from the N-terminus, the 360-residue chain is MLYWLTALSDGGDFFNLFRYITFRAGGAFLTALIFGFVFGKPLINVLRKRQGKGQPIRDDGPEAHLAKVGTPTMGGLLIVGALLFSTLMWARWDNPFVWLVLFVTMSFGLIGFADDYAKVSKQNTSGVSGKVRLLLGFVIAIVAALWASWNHPAELQNQLAMPVFKDVLLNLGYLYVPFCICVIVGAANAVNLTDGLDGLAIMPVMIAAGTLGIIAYAVGRVDFSEYLDVHYVPGTGEILIFTSALFGGGLGFLWYNAPPAAVFMGDTGSLALGGALGAIAISTKHELVLAIVGGLFVVEALSVIIQVLYFKRTGRRVFLMAPIHHHYEKKGWAEPTIVIRFWIISLILAMIGLATLKVR.

Transmembrane regions (helical) follow at residues 27–47, 69–89, 93–113, 134–154, 168–188, 199–219, 239–259, 262–282, 288–308, and 337–357; these read GAFLTALIFGFVFGKPLINVL, VGTPTMGGLLIVGALLFSTLM, WDNPFVWLVLFVTMSFGLIGF, LLLGFVIAIVAALWASWNHPA, VLLNLGYLYVPFCICVIVGAA, GLAIMPVMIAAGTLGIIAYAV, ILIFTSALFGGGLGFLWYNAP, AVFMGDTGSLALGGALGAIAI, LVLAIVGGLFVVEALSVIIQV, and TIVIRFWIISLILAMIGLATL.

It belongs to the glycosyltransferase 4 family. MraY subfamily. Mg(2+) is required as a cofactor.

It is found in the cell inner membrane. It carries out the reaction UDP-N-acetyl-alpha-D-muramoyl-L-alanyl-gamma-D-glutamyl-meso-2,6-diaminopimeloyl-D-alanyl-D-alanine + di-trans,octa-cis-undecaprenyl phosphate = di-trans,octa-cis-undecaprenyl diphospho-N-acetyl-alpha-D-muramoyl-L-alanyl-D-glutamyl-meso-2,6-diaminopimeloyl-D-alanyl-D-alanine + UMP. It participates in cell wall biogenesis; peptidoglycan biosynthesis. Functionally, catalyzes the initial step of the lipid cycle reactions in the biosynthesis of the cell wall peptidoglycan: transfers peptidoglycan precursor phospho-MurNAc-pentapeptide from UDP-MurNAc-pentapeptide onto the lipid carrier undecaprenyl phosphate, yielding undecaprenyl-pyrophosphoryl-MurNAc-pentapeptide, known as lipid I. The protein is Phospho-N-acetylmuramoyl-pentapeptide-transferase of Ruegeria sp. (strain TM1040) (Silicibacter sp.).